A 110-amino-acid polypeptide reads, in one-letter code: Small ribosomal subunit protein eS25 (110 aa).

The tract at residues 1-39 is disordered; sequence MPPKAAGGKSKQIQASKAAAKGSSGGAGRKKWSKGRSRE.

This sequence belongs to the eukaryotic ribosomal protein eS25 family.

The polypeptide is Small ribosomal subunit protein eS25 (rps25) (Dictyostelium discoideum (Social amoeba)).